We begin with the raw amino-acid sequence, 127 residues long: Profilin (127 aa).

Belongs to the profilin family. As to quaternary structure, occurs in many kinds of cells as a complex with monomeric actin in a 1:1 ratio.

It localises to the cytoplasm. Its subcellular location is the cytoskeleton. Functionally, binds to actin and affects the structure of the cytoskeleton. At high concentrations, profilin prevents the polymerization of actin, whereas it enhances it at low concentrations. By binding to PIP2, it inhibits the formation of IP3 and DG. In S.pombe, it is essential for cytokinesis. The protein is Profilin (cdc3) of Schizosaccharomyces pombe (strain 972 / ATCC 24843) (Fission yeast).